Here is a 66-residue protein sequence, read N- to C-terminus: Large ribosomal subunit protein bL33c (66 aa).

This sequence belongs to the bacterial ribosomal protein bL33 family.

The protein localises to the plastid. It localises to the chloroplast. The chain is Large ribosomal subunit protein bL33c from Brachypodium distachyon (Purple false brome).